The chain runs to 335 residues: Mycobacterial beta-ketoacyl-[acyl-carrier-protein] synthase III (335 aa).

Residues C122 and H258 contribute to the active site. An ACP-binding region spans residues Q259–R263. N289 is a catalytic residue.

This sequence belongs to the thiolase-like superfamily. FabH family. As to quaternary structure, homodimer.

It is found in the cytoplasm. It carries out the reaction malonyl-[ACP] + dodecanoyl-CoA + H(+) = 3-oxotetradecanoyl-[ACP] + CO2 + CoA. Its pathway is lipid metabolism; fatty acid biosynthesis. It participates in lipid metabolism; mycolic acid biosynthesis. Functionally, catalyzes the condensation reaction of fatty acid synthesis by the addition to an acyl acceptor of two carbons from malonyl-ACP. Catalyzes the first condensation reaction which initiates fatty acid synthesis and may therefore play a role in governing the total rate of fatty acid production. Possesses both acetoacetyl-ACP synthase and acetyl transacylase activities. Its substrate specificity determines the biosynthesis of branched-chain and/or straight-chain of fatty acids. The polypeptide is Mycobacterial beta-ketoacyl-[acyl-carrier-protein] synthase III (Mycobacterium marinum (strain ATCC BAA-535 / M)).